Reading from the N-terminus, the 547-residue chain is Chaperonin GroEL (547 aa).

Residues 30–33 (TLGP), 87–91 (DGTTT), glycine 414, 478–480 (DAL), and aspartate 494 each bind ATP.

This sequence belongs to the chaperonin (HSP60) family. As to quaternary structure, forms a cylinder of 14 subunits composed of two heptameric rings stacked back-to-back. Interacts with the co-chaperonin GroES.

It localises to the cytoplasm. It carries out the reaction ATP + H2O + a folded polypeptide = ADP + phosphate + an unfolded polypeptide.. Together with its co-chaperonin GroES, plays an essential role in assisting protein folding. The GroEL-GroES system forms a nano-cage that allows encapsulation of the non-native substrate proteins and provides a physical environment optimized to promote and accelerate protein folding. The polypeptide is Chaperonin GroEL (Desulforudis audaxviator (strain MP104C)).